Here is a 176-residue protein sequence, read N- to C-terminus: Oleosin Ara h 14.0101 (176 aa).

N-acetylalanine; alternate is present on Ala2. The next 2 membrane-spanning stretches (helical) occupy residues 50 to 80 (IIAV…GLAI) and 95 to 117 (AVVT…LTGL). Residues 157-176 (TKDAGQQIQTKAQDVKRSSS) form a disordered region.

Belongs to the oleosin family. As to quaternary structure, homodimer. Forms oligomers. In terms of tissue distribution, expressed in seeds (at protein level). Not expressed in leaves.

Its subcellular location is the lipid droplet. It is found in the membrane. In terms of biological role, may have a structural role to stabilize the lipid body during desiccation of the seed by preventing coalescence of the oil. Probably interacts with both lipid and phospholipid moieties of lipid bodies. May also provide recognition signals for specific lipase anchorage in lipolysis during seedling growth. The chain is Oleosin Ara h 14.0101 from Arachis hypogaea (Peanut).